We begin with the raw amino-acid sequence, 141 residues long: UPF0310 protein Mflv_0785 (141 aa).

It belongs to the UPF0310 family.

This is UPF0310 protein Mflv_0785 from Mycolicibacterium gilvum (strain PYR-GCK) (Mycobacterium gilvum (strain PYR-GCK)).